The sequence spans 410 residues: Peptidase T (410 aa).

His79 lines the Zn(2+) pocket. Asp81 is an active-site residue. Asp142 lines the Zn(2+) pocket. The active-site Proton acceptor is Glu176. Residues Glu177, Asp199, and His381 each contribute to the Zn(2+) site.

It belongs to the peptidase M20B family. Zn(2+) is required as a cofactor.

It localises to the cytoplasm. It catalyses the reaction Release of the N-terminal residue from a tripeptide.. Its function is as follows. Cleaves the N-terminal amino acid of tripeptides. This Bacillus subtilis (strain 168) protein is Peptidase T (pepT).